The following is a 368-amino-acid chain: Homoserine O-acetyltransferase (368 aa).

In terms of domain architecture, AB hydrolase-1 spans 47-349; sequence NAILICHALS…SGEGHDSFLL (303 aa). The active-site Nucleophile is the serine 153. Arginine 221 serves as a coordination point for substrate. Catalysis depends on residues aspartate 311 and histidine 344. Position 345 (aspartate 345) interacts with substrate.

It belongs to the AB hydrolase superfamily. MetX family. Homodimer.

The protein localises to the cytoplasm. The enzyme catalyses L-homoserine + acetyl-CoA = O-acetyl-L-homoserine + CoA. It participates in amino-acid biosynthesis; L-methionine biosynthesis via de novo pathway; O-acetyl-L-homoserine from L-homoserine: step 1/1. In terms of biological role, transfers an acetyl group from acetyl-CoA to L-homoserine, forming acetyl-L-homoserine. This chain is Homoserine O-acetyltransferase, found in Leptospira borgpetersenii serovar Hardjo-bovis (strain JB197).